The primary structure comprises 553 residues: uncharacterized protein (553 aa).

The signal sequence occupies residues 1-28; the sequence is MRYARHASRYSLFTLAVSAALLPGAGWA.

This is an uncharacterized protein from Pseudomonas aeruginosa (strain ATCC 15692 / DSM 22644 / CIP 104116 / JCM 14847 / LMG 12228 / 1C / PRS 101 / PAO1).